The chain runs to 336 residues: Phospho-N-acetylmuramoyl-pentapeptide-transferase (336 aa).

The next 10 helical transmembrane spans lie at 3 to 23 (LTLI…PYFI), 53 to 73 (GGTV…LFSI), 78 to 98 (SLAL…IGFL), 118 to 138 (LALQ…PSGI), 143 to 163 (VFGY…FWVV), 174 to 194 (GIDG…GVIA), 200 to 220 (FDVL…FCFN), 226 to 246 (VFMG…ISIA), 251 to 271 (WTLL…MLQV), and 316 to 336 (AFLW…LYVF).

The protein belongs to the glycosyltransferase 4 family. MraY subfamily. The cofactor is Mg(2+).

Its subcellular location is the cell membrane. It catalyses the reaction UDP-N-acetyl-alpha-D-muramoyl-L-alanyl-gamma-D-glutamyl-L-lysyl-D-alanyl-D-alanine + di-trans,octa-cis-undecaprenyl phosphate = Mur2Ac(oyl-L-Ala-gamma-D-Glu-L-Lys-D-Ala-D-Ala)-di-trans,octa-cis-undecaprenyl diphosphate + UMP. It participates in cell wall biogenesis; peptidoglycan biosynthesis. Its function is as follows. Catalyzes the initial step of the lipid cycle reactions in the biosynthesis of the cell wall peptidoglycan: transfers peptidoglycan precursor phospho-MurNAc-pentapeptide from UDP-MurNAc-pentapeptide onto the lipid carrier undecaprenyl phosphate, yielding undecaprenyl-pyrophosphoryl-MurNAc-pentapeptide, known as lipid I. This Streptococcus pyogenes serotype M4 (strain MGAS10750) protein is Phospho-N-acetylmuramoyl-pentapeptide-transferase.